The following is a 314-amino-acid chain: tRNA dimethylallyltransferase (314 aa).

Position 11–18 (11–18 (GPTASGKT)) interacts with ATP. 13-18 (TASGKT) is a binding site for substrate. 4 interaction with substrate tRNA regions span residues 36-39 (DSAL), 160-164 (QRINR), 241-246 (RCVGYR), and 274-281 (KRQITWLR).

The protein belongs to the IPP transferase family. As to quaternary structure, monomer. Mg(2+) serves as cofactor.

The catalysed reaction is adenosine(37) in tRNA + dimethylallyl diphosphate = N(6)-dimethylallyladenosine(37) in tRNA + diphosphate. Its function is as follows. Catalyzes the transfer of a dimethylallyl group onto the adenine at position 37 in tRNAs that read codons beginning with uridine, leading to the formation of N6-(dimethylallyl)adenosine (i(6)A). The sequence is that of tRNA dimethylallyltransferase from Glaesserella parasuis serovar 5 (strain SH0165) (Haemophilus parasuis).